The following is a 182-amino-acid chain: MEHEVVSALAAFTQRYVDCWQQEKGHLPASEALYGIPSPCIVENHEDTVYWSPQPFAPAAALDGVERALEISLHPDVHAFYTAQYAGDMAAQFDSLSCQLLQVWSEDDFTRMQENLIGHLLTQKRLKLTPTLFLATTDSEMTMVSLCNISGEIILEEFGTKKRQILAPTLAAFLFGLNPLAV.

This sequence belongs to the Syd family.

The protein localises to the cell inner membrane. Its function is as follows. Interacts with the SecY protein in vivo. May bind preferentially to an uncomplexed state of SecY, thus functioning either as a chelating agent for excess SecY in the cell or as a regulatory factor that negatively controls the translocase function. The protein is Protein Syd of Pectobacterium carotovorum subsp. carotovorum (strain PC1).